Consider the following 142-residue polypeptide: Hemoglobin subunit alpha-B (142 aa).

In terms of domain architecture, Globin spans 2-142; that stretch reads PFSASDRHDI…VSETLYSKYR (141 aa). Residue Q59 coordinates O2. Residue H88 coordinates heme b.

It belongs to the globin family. As to quaternary structure, heterotetramer of either two alpha-B chains or two alpha-C chains and two beta chains. The two major hemoglobins, B and C, associate upon deoxygenation to form a trimer of tetramers, BC2, that has a much lower affinity for oxygen than either component alone. Red blood cells.

In terms of biological role, the alpha-B chain is a component of adult hemoglobin B. The polypeptide is Hemoglobin subunit alpha-B (Aquarana catesbeiana (American bullfrog)).